The sequence spans 463 residues: Type I restriction enzyme StySPI specificity subunit (463 aa).

Belongs to the type-I restriction system S methylase family. The type I restriction/modification system is composed of three polypeptides R, M and S; the restriction enzyme has stoichiometry R(2)M(2)S(1) while the methyltransferase is M(2)S(1).

In terms of biological role, the specificity (S) subunit of a type I restriction enzyme; this subunit dictates DNA sequence specificity. The M and S subunits together form a methyltransferase (MTase) that methylates A-2 on the top strand and A-3 on the bottom strand of the sequence 5'-AACN(6)GTRC-3'. In the presence of the R subunit the complex can also act as an endonuclease, binding to the same target sequence but cutting the DNA some distance from this site. Whether the DNA is cut or modified depends on the methylation state of the target sequence. When the target site is unmodified, the DNA is cut. When the target site is hemimethylated, the complex acts as a maintenance MTase modifying the DNA so that both strands become methylated. After locating a non-methylated recognition site, the enzyme complex serves as a molecular motor that translocates DNA in an ATP-dependent manner until a collision occurs that triggers cleavage. This is Type I restriction enzyme StySPI specificity subunit from Salmonella potsdam.